Reading from the N-terminus, the 178-residue chain is Leukemia NUP98 fusion partner 1 (178 aa).

Disordered stretches follow at residues 28 to 55 (EDQR…PLPV), 89 to 108 (SEDG…HSKI), and 147 to 178 (IKSR…KGPE). A compositionally biased stretch (basic residues) spans 34–47 (RERHRLQATSHRKT). The span at 147 to 167 (IKSRKKVEEERSSRKEEHGEA) shows a compositional bias: basic and acidic residues.

The polypeptide is Leukemia NUP98 fusion partner 1 (LNP1) (Homo sapiens (Human)).